The chain runs to 60 residues: Large ribosomal subunit protein uL30 (60 aa).

Belongs to the universal ribosomal protein uL30 family. In terms of assembly, part of the 50S ribosomal subunit.

This chain is Large ribosomal subunit protein uL30, found in Streptomyces coelicolor (strain ATCC BAA-471 / A3(2) / M145).